Consider the following 158-residue polypeptide: MKCPFCGNADTQVVDSRVSEEGDTIRRRRRCLSCDKRFTTYERIELAMPSVVKRNGSRSDYDTAKLRASLSLALRKRPVSTDQVDSVVARIEETLLASGQREVSTERIGELVMAELKKLDKVGYVRFASVYKNFEDIGEFVDAIREMQGPMLPGKLRK.

Residues 3–34 (CPFCGNADTQVVDSRVSEEGDTIRRRRRCLSC) fold into a zinc finger. The ATP-cone domain occupies 49–139 (PSVVKRNGSR…VYKNFEDIGE (91 aa)).

This sequence belongs to the NrdR family. The cofactor is Zn(2+).

In terms of biological role, negatively regulates transcription of bacterial ribonucleotide reductase nrd genes and operons by binding to NrdR-boxes. The protein is Transcriptional repressor NrdR of Bordetella petrii (strain ATCC BAA-461 / DSM 12804 / CCUG 43448).